The sequence spans 105 residues: Cell division protein FtsB (105 aa).

Topologically, residues 1–3 (MKP) are cytoplasmic. Residues 4–21 (FVLVLFALLALLQYRLWF) form a helical membrane-spanning segment. Topologically, residues 22–105 (GENSLTEYFT…RSSEQSQDNQ (84 aa)) are periplasmic. Residues 38–75 (HQQSGNAELLERNEVLKEEIQDLKSGTEALEERARNEL) adopt a coiled-coil conformation.

This sequence belongs to the FtsB family. As to quaternary structure, part of a complex composed of FtsB, FtsL and FtsQ.

Its subcellular location is the cell inner membrane. Its function is as follows. Essential cell division protein. May link together the upstream cell division proteins, which are predominantly cytoplasmic, with the downstream cell division proteins, which are predominantly periplasmic. The polypeptide is Cell division protein FtsB (Shewanella amazonensis (strain ATCC BAA-1098 / SB2B)).